The following is a 57-amino-acid chain: Large ribosomal subunit protein bL32 (57 aa).

It belongs to the bacterial ribosomal protein bL32 family.

The protein is Large ribosomal subunit protein bL32 of Shouchella clausii (strain KSM-K16) (Alkalihalobacillus clausii).